The following is a 356-amino-acid chain: Malate dehydrogenase, glyoxysomal (356 aa).

The N-terminal 36 residues, M1 to C36, are a transit peptide targeting the glyoxysome. NAD(+) is bound by residues G51 to G57 and D77. Substrate-binding residues include R124 and R130. NAD(+) is bound by residues N137 and I160–N162. Positions 162 and 196 each coordinate substrate. The active-site Proton acceptor is the H220. Position 271 (M271) interacts with NAD(+).

This sequence belongs to the LDH/MDH superfamily. MDH type 1 family. Homodimer.

The protein resides in the glyoxysome. The catalysed reaction is (S)-malate + NAD(+) = oxaloacetate + NADH + H(+). The polypeptide is Malate dehydrogenase, glyoxysomal (MDHG) (Cucumis sativus (Cucumber)).